The sequence spans 79 residues: Acyl carrier protein (79 aa).

In terms of domain architecture, Carrier spans 2–77 (DNIEQRVKKI…QAIDYARANV (76 aa)). The residue at position 37 (Ser-37) is an O-(pantetheine 4'-phosphoryl)serine.

It belongs to the acyl carrier protein (ACP) family. In terms of processing, 4'-phosphopantetheine is transferred from CoA to a specific serine of apo-ACP by AcpS. This modification is essential for activity because fatty acids are bound in thioester linkage to the sulfhydryl of the prosthetic group.

The protein localises to the cytoplasm. Its pathway is lipid metabolism; fatty acid biosynthesis. Carrier of the growing fatty acid chain in fatty acid biosynthesis. The polypeptide is Acyl carrier protein (Burkholderia cenocepacia (strain HI2424)).